Here is a 359-residue protein sequence, read N- to C-terminus: Heme A synthase (359 aa).

The next 6 membrane-spanning stretches (helical) occupy residues Ala23–Gly43, Tyr85–Trp105, Leu109–Gly129, Leu137–Val157, Leu172–Ser192, and Ala212–Leu232. His276 is a heme binding site. A run of 3 helical transmembrane segments spans residues Met278–Leu298, Ile308–Val328, and Val329–Val349. Residue His337 coordinates heme.

This sequence belongs to the COX15/CtaA family. Type 2 subfamily. Interacts with CtaB. Heme b serves as cofactor.

It localises to the cell membrane. The catalysed reaction is Fe(II)-heme o + 2 A + H2O = Fe(II)-heme a + 2 AH2. The protein operates within porphyrin-containing compound metabolism; heme A biosynthesis; heme A from heme O: step 1/1. Functionally, catalyzes the conversion of heme O to heme A by two successive hydroxylations of the methyl group at C8. The first hydroxylation forms heme I, the second hydroxylation results in an unstable dihydroxymethyl group, which spontaneously dehydrates, resulting in the formyl group of heme A. The chain is Heme A synthase from Beijerinckia indica subsp. indica (strain ATCC 9039 / DSM 1715 / NCIMB 8712).